A 467-amino-acid chain; its full sequence is Light-independent protochlorophyllide reductase subunit N (467 aa).

3 residues coordinate [4Fe-4S] cluster: Cys-23, Cys-48, and Cys-108.

The protein belongs to the BchN/ChlN family. As to quaternary structure, protochlorophyllide reductase is composed of three subunits; ChlL, ChlN and ChlB. Forms a heterotetramer of two ChlB and two ChlN subunits. The cofactor is [4Fe-4S] cluster.

It carries out the reaction chlorophyllide a + oxidized 2[4Fe-4S]-[ferredoxin] + 2 ADP + 2 phosphate = protochlorophyllide a + reduced 2[4Fe-4S]-[ferredoxin] + 2 ATP + 2 H2O. Its pathway is porphyrin-containing compound metabolism; chlorophyll biosynthesis (light-independent). Its function is as follows. Component of the dark-operative protochlorophyllide reductase (DPOR) that uses Mg-ATP and reduced ferredoxin to reduce ring D of protochlorophyllide (Pchlide) to form chlorophyllide a (Chlide). This reaction is light-independent. The NB-protein (ChlN-ChlB) is the catalytic component of the complex. The sequence is that of Light-independent protochlorophyllide reductase subunit N from Nostoc sp. (strain PCC 7120 / SAG 25.82 / UTEX 2576).